The following is a 340-amino-acid chain: C5a anaphylatoxin chemotactic receptor 1 (340 aa).

Residues 1–30 (TPDYGHYDDKDTLDANTPVDKTSNTLRVPD) are Extracellular-facing. Residues 3-11 (DYGHYDDKD) are required for CHIPS binding. Sulfotyrosine occurs at positions 4 and 7. Residues 14 to 23 (DANTPVDKTS) form an involved in C5a binding region. A helical transmembrane segment spans residues 31-57 (ILALVIFAVVFLVGVLRNALVVWVTAF). Topologically, residues 58 to 62 (EAKRT) are cytoplasmic. A helical membrane pass occupies residues 63–86 (INAIWFLNLAVADFLSCLALPILF). Residues 87 to 103 (TSIVQHHHWPFGGAACR) lie on the Extracellular side of the membrane. C102 and C181 are disulfide-bonded. Residues 104–125 (ILPSLILLNMYASILLLATISA) form a helical membrane-spanning segment. Over 126 to 146 (DRFLLVFNPIWCQNFRGAGLA) the chain is Cytoplasmic. Residues 147–167 (WIACAVAWGLALLLTIPSFLY) traverse the membrane as a helical segment. Residues 168-193 (RVVREEYFPPKVLCGVDHGHDKRRER) are Extracellular-facing. A helical transmembrane segment spans residues 194-219 (AVAIARLVLGFVWPLLTLTMCYTFLL). At 220 to 235 (LRTWSRRATRSTKTLK) the chain is on the cytoplasmic side. The chain crosses the membrane as a helical span at residues 236–258 (VVVAVVASFFIFWLPYQVTGMMM). The Extracellular segment spans residues 259–275 (SFLEPSSPTFLLLKKLD). A helical membrane pass occupies residues 276-296 (SLCISFAYINCCINPIIYVVA). The Cytoplasmic portion of the chain corresponds to 297 to 340 (GQGFQGRLRKSLPSLLRNVLTEESMVRESKSFTRSTVDTMAQKT). 6 positions are modified to phosphoserine: S307, S310, S320, S325, S327, and S331.

It belongs to the G-protein coupled receptor 1 family. Homodimer. May also form higher-order oligomers. Interacts (when phosphorylated) with ARRB1 and ARRB2; the interaction is associated with internalization of C5aR. Interacts (via N-terminal domain) with S.aureus chemotaxis inhibitory protein (CHIPS); the interaction blocks the receptor and may thus inhibit the immune response. Post-translationally, sulfation plays a critical role in the association of C5aR with C5a, but no significant role in the ability of the receptor to transduce a signal and mobilize calcium in response to a small peptide agonist. Sulfation at Tyr-7 is important for CHIPS binding. Phosphorylated on serine residues in response to C5a binding, resulting in internalization of the receptor and short-term desensitization to C5a.

The protein localises to the cell membrane. Its subcellular location is the cytoplasmic vesicle. In terms of biological role, receptor for the chemotactic and inflammatory peptide anaphylatoxin C5a. The ligand interacts with at least two sites on the receptor: a high-affinity site on the extracellular N-terminus, and a second site in the transmembrane region which activates downstream signaling events. Receptor activation stimulates chemotaxis, granule enzyme release, intracellular calcium release and superoxide anion production. In Macaca mulatta (Rhesus macaque), this protein is C5a anaphylatoxin chemotactic receptor 1 (C5AR1).